A 913-amino-acid chain; its full sequence is SUN domain-containing protein 1 (913 aa).

The segment at 1 to 139 (MDFSRLHTYT…VLRHPVLDES (139 aa)) is LMNA-binding. Residues 1–415 (MDFSRLHTYT…LTRCLRNICK (415 aa)) are Nuclear-facing. Phosphoserine is present on residues serine 48 and serine 66. The span at 69–81 (SQAIDSHISTSRA) shows a compositional bias: polar residues. Positions 69–120 (SQAIDSHISTSRATPAKGRETRTVKQRRSASKPAFSINHLSGKGLSSSTSHD) are disordered. The span at 108–120 (LSGKGLSSSTSHD) shows a compositional bias: low complexity. The residue at position 139 (serine 139) is a Phosphoserine. The interval 209–302 (SRVYSRDRTL…MTAGELSRVD (94 aa)) is SYNE2-binding. Residues 223 to 302 (VSFYLDRTLW…MTAGELSRVD (80 aa)) are EMD-binding. A helical membrane pass occupies residues 416–436 (VFVLLLPLLLLLGAGVSLWGQ). At 437-913 (GNFFSLLPVL…RFRVHGEPIQ (477 aa)) the chain is on the perinuclear space side. Positions 456–485 (RVDDSKGMHRPGPLPPSPPPKVDHKASQWP) are disordered. Coiled-coil stretches lie at residues 491 to 533 (GQKV…EGLS) and 563 to 638 (HHDH…CEQA). Residues 703 to 913 (TSEAIVSAVN…RFRVHGEPIQ (211 aa)) form a sufficient for interaction with SYNE1 and SYNE2 region. The region spanning 751–912 (GGSILSTRCS…YRFRVHGEPI (162 aa)) is the SUN domain.

Core component of the LINC complex which is composed of inner nuclear membrane SUN domain-containing proteins coupled to outer nuclear membrane KASH domain-containing nesprins. SUN and KASH domain-containing proteins seem to bind each other promiscuously; however, differentially expression of LINC complex constituents is giving rise to specific assemblies. At least SUN1/2-containing core LINC complexes are proposed to be hexameric composed of three protomers of each KASH and SUN domain-containing protein. Interacts with KASH5 (via the last 22 amino acids); this interaction mediates KASH5 telomere localization by forming a SUN1:KASH5 LINC complex. Isoform 5 is proposed to form a non-nuclear spermatogenesis-specific LINC complex with SYNE3 during sperm head formation. Interacts with SYNE2 and SYNE1; probably forming respective LINC complexes. Interacts with A-type lamin with a strong preference for unprocessed A-type lamin compared with the mature protein. Interaction with lamins B1 and C is hardly detectable. Interacts with NAT10. Interacts with EMD and TSNAX. Associates with the nuclear pore complex (NPC). Interacts with CCDC79/TERB1; promoting the accumulation of the LINC complex complexes at the telomere-nuclear envelope attachment sites. Interacts with IRAG2. Interacts (via KASH domain) with TMEM258. The disulfide bond with KASH domain-containing nesprins is required for stability of the respective LINC complexes under tensile forces. In terms of tissue distribution, widely expressed. Expressed in cochlear outer hair cells (at protein level). Seven isoforms are expressed in testis including testis-specific isoform 5. Isoform 5 is the only isoform expressed at the end of sperm differentiation. Six isoforms are expressed in muscle, heart and brain, four isoforms in kidney and three isoforms in liver.

The protein resides in the nucleus inner membrane. Its subcellular location is the cytoplasmic vesicle. It localises to the secretory vesicle. The protein localises to the acrosome outer membrane. Functionally, as a component of the LINC (LInker of Nucleoskeleton and Cytoskeleton) complex involved in the connection between the nuclear lamina and the cytoskeleton. The nucleocytoplasmic interactions established by the LINC complex play an important role in the transmission of mechanical forces across the nuclear envelope and in nuclear movement and positioning. Required for interkinetic nuclear migration (INM) and essential for nucleokinesis and centrosome-nucleus coupling during radial neuronal migration in the cerebral cortex and during glial migration. Involved in telomere attachment to nuclear envelope in the prophase of meiosis implicating a SUN1/2:KASH5 LINC complex in which SUN1 and SUN2 seem to act at least partial redundantly. Required for gametogenesis and involved in selective gene expression of coding and non-coding RNAs needed for gametogenesis. Helps to define the distribution of nuclear pore complexes (NPCs). Required for efficient localization of SYNE4 in the nuclear envelope. May be involved in nuclear remodeling during sperm head formation in spermatogenesis. May play a role in DNA repair by suppressing non-homologous end joining repair to facilitate the repair of DNA cross-links. Its function is as follows. Isoform 5 may be involved in nuclear remodeling during sperm head formation in spermatogenesis. A probable SUN1 isoform 5:SYNE3 LINC complex may tether spermatid nuclei to anterior cytoskeletal structures such as actin filaments present at membraneous junctions of spermatids and Sertoli cells. The protein is SUN domain-containing protein 1 of Mus musculus (Mouse).